A 422-amino-acid polypeptide reads, in one-letter code: Phospho-N-acetylmuramoyl-pentapeptide-transferase (422 aa).

9 helical membrane passes run 28-48 (LMAIILALLISSIWGDKFINL), 71-91 (VGVPSMGGVIIIVAILIPCLL), 95-115 (LHNIYMILMLITTVWLGSLGF), 136-156 (IIGQVGLGLIVGLTLYLSPDV), 211-231 (AGWILFVIITIFVVTAVSNGA), 246-266 (AIIGLTLGILAYVSSHIEFAG), 279-299 (LVIFICAFIGALIGFLWYNAY), 313-333 (IGGIIAVFAIIIHKELLIPIL), and 399-419 (KITVRFWIVTIVLAAITIITL).

The protein belongs to the glycosyltransferase 4 family. MraY subfamily. Mg(2+) is required as a cofactor.

It is found in the cell inner membrane. The catalysed reaction is UDP-N-acetyl-alpha-D-muramoyl-L-alanyl-gamma-D-glutamyl-meso-2,6-diaminopimeloyl-D-alanyl-D-alanine + di-trans,octa-cis-undecaprenyl phosphate = di-trans,octa-cis-undecaprenyl diphospho-N-acetyl-alpha-D-muramoyl-L-alanyl-D-glutamyl-meso-2,6-diaminopimeloyl-D-alanyl-D-alanine + UMP. It functions in the pathway cell wall biogenesis; peptidoglycan biosynthesis. Functionally, catalyzes the initial step of the lipid cycle reactions in the biosynthesis of the cell wall peptidoglycan: transfers peptidoglycan precursor phospho-MurNAc-pentapeptide from UDP-MurNAc-pentapeptide onto the lipid carrier undecaprenyl phosphate, yielding undecaprenyl-pyrophosphoryl-MurNAc-pentapeptide, known as lipid I. In Bacteroides fragilis (strain ATCC 25285 / DSM 2151 / CCUG 4856 / JCM 11019 / LMG 10263 / NCTC 9343 / Onslow / VPI 2553 / EN-2), this protein is Phospho-N-acetylmuramoyl-pentapeptide-transferase.